The following is a 164-amino-acid chain: MQITLARIDDRLIHGQVTTVWSKVANAQRIIICNDDVFNDEVRRTLLRQAAPPGMKVNVVSLEKAVAVYHNPQYQDETVFYLFTNPHDVLTMVRQGVQIATLNIGGMAWRPGKKQLTKAVSLDPQDIQAFRELDKLGVKLDLRVVASDPSVNILDKINETAFCE.

The PTS EIIB type-4 domain maps to 1-164 (MQITLARIDD…DKINETAFCE (164 aa)). The active-site Pros-phosphohistidine intermediate is the H14. The residue at position 14 (H14) is a Phosphohistidine; by EIIA.

Dimer of dimers.

It localises to the cytoplasm. The catalysed reaction is keto-L-sorbose(out) + N(pros)-phospho-L-histidyl-[protein] = L-sorbose 1-phosphate(in) + L-histidyl-[protein]. Its function is as follows. The phosphoenolpyruvate-dependent sugar phosphotransferase system (PTS), a major carbohydrate active transport system, catalyzes the phosphorylation of incoming sugar substrates concomitant with their translocation across the cell membrane. The enzyme II SorABFM PTS system is involved in L-sorbose transport. In Klebsiella pneumoniae, this protein is PTS system sorbose-specific EIIB component.